The sequence spans 509 residues: Protein Jade-1 (509 aa).

Residues 1–45 (MKRGRLPSSSEDSDDNGSLSTTWSQNSRSQHRRSSCSRPEDRKPS) form a disordered region. Positions 60-80 (DSYQLNPDEYYVLADPWRQEW) are interaction with KAT7/HBO1 and histones. Positions 80-188 (WEKGVQVPVS…EQRCYDNMNH (109 aa)) are interaction with histones. Phosphoserine is present on serine 89. Threonine 92 carries the post-translational modification Phosphothreonine. A Glycyl lysine isopeptide (Lys-Gly) (interchain with G-Cter in SUMO2) cross-link involves residue lysine 114. The PHD-type 1 zinc finger occupies 203–253 (YVVCDVCQSPDGEDGNEMVFCDKCNICVHQACYGILKVPEGSWLCRTCALG). The C2HC pre-PHD-type zinc finger occupies 255-289 (QPKCLLCPKKGGAMKPTRSGTKWVHVSCALWIPEV). The PHD-type 2 zinc-finger motif lies at 313-369 (LVCSLCNEKFGASIQCSVKNCRTAFHVTCAFDRGLEMKTILAENDEVKFKSYCPKHS). Residues 373–399 (KAEEGLGEGTAQENGAPECSPRDPLEP) form a disordered region.

Belongs to the JADE family. In terms of assembly, component of the HBO1 complex composed at least of ING4 or ING5, KAT7/HBO1, MEAF6, and one of JADE1, JADE2 and JADE3. Interacts with NPHP4.

The protein resides in the nucleus. It localises to the chromosome. It is found in the cytoplasm. Its subcellular location is the cytoskeleton. The protein localises to the cilium basal body. In terms of biological role, scaffold subunit of some HBO1 complexes, which have a histone H4 acetyltransferase activity. Plays a key role in HBO1 complex by directing KAT7/HBO1 specificity towards histone H4 acetylation (H4K5ac, H4K8ac and H4K12ac), regulating DNA replication initiation, regulating DNA replication initiation. May also promote acetylation of nucleosomal histone H4 by KAT5. Promotes apoptosis. May act as a renal tumor suppressor. Negatively regulates canonical Wnt signaling; at least in part, cooperates with NPHP4 in this function. This chain is Protein Jade-1 (JADE1), found in Bos taurus (Bovine).